Reading from the N-terminus, the 352-residue chain is Nodal homolog 4-B (352 aa).

Residues 1 to 18 (MHLYFSCFILLFVPGGKS) form the signal peptide. Residues 19–278 (LGINSHLKHM…TIANSRRHRR (260 aa)) constitute a propeptide that is removed on maturation. N-linked (GlcNAc...) asparagine glycans are attached at residues asparagine 30, asparagine 37, asparagine 199, and asparagine 238. The disordered stretch occupies residues 197-223 (GKNHSEGHMKQPKKLHRAKSAERRYQQ).

Belongs to the TGF-beta family. In terms of assembly, homodimer; disulfide-linked.

The protein resides in the secreted. Cooperation and regulatory loops of multiple nodals are essential for mesendoderm patterning in early embryos. Plays a role in mesoderm formation and may be required for neural development. The sequence is that of Nodal homolog 4-B (nodal4-b) from Xenopus laevis (African clawed frog).